The following is a 678-amino-acid chain: NADPH--cytochrome P450 reductase (678 aa).

G2 is subject to N-acetylglycine. The Lumenal portion of the chain corresponds to 2–22 (GDSHEDTSATVPEAVAEEVSL). The chain crosses the membrane as a helical span at residues 23–43 (FSTTDIVLFSLIVGVLTYWFI). Residues 44-678 (FKKKKEEIPE…KGRYSLDVWS (635 aa)) are Cytoplasmic-facing. Residues 80 to 224 (IIVFYGSQTG…DFITWREQFW (145 aa)) enclose the Flavodoxin-like domain. FMN-binding positions include 86-91 (SQTGTA), 138-141 (ATYG), 173-182 (LGNKTYEHFN), and D208. Residues 279-521 (KNPFLAAVTT…FVRKSQFRLP (243 aa)) enclose the FAD-binding FR-type domain. R298 is an NADP(+) binding site. Residues R424, 454–457 (RYYS), 472–474 (CAV), Y478, and 488–491 (GVAT) each bind FAD. NADP(+) is bound by residues T535, 596-597 (SR), 602-606 (KVYVQ), and D639. W677 serves as a coordination point for FAD.

This sequence belongs to the NADPH--cytochrome P450 reductase family. In the N-terminal section; belongs to the flavodoxin family. The protein in the C-terminal section; belongs to the flavoprotein pyridine nucleotide cytochrome reductase family. It depends on FAD as a cofactor. FMN is required as a cofactor.

The protein resides in the endoplasmic reticulum membrane. It carries out the reaction 2 oxidized [cytochrome P450] + NADPH = 2 reduced [cytochrome P450] + NADP(+) + H(+). Functionally, this enzyme is required for electron transfer from NADP to cytochrome P450 in microsomes. It can also provide electron transfer to heme oxygenase and cytochrome B5. This is NADPH--cytochrome P450 reductase from Mus musculus (Mouse).